We begin with the raw amino-acid sequence, 192 residues long: Adenylate kinase (192 aa).

10 to 18 (GVPGVGGTT) is an ATP binding site.

Belongs to the archaeal adenylate kinase family. In terms of assembly, monomer.

It is found in the cytoplasm. The enzyme catalyses AMP + ATP = 2 ADP. This is Adenylate kinase (adkA) from Methanothermococcus thermolithotrophicus (Methanococcus thermolithotrophicus).